Reading from the N-terminus, the 360-residue chain is Cannabinoid receptor 2 (360 aa).

At 1–33 (MEECWVTEIANGSKDGLDSNPMKDYMILSGPQK) the chain is on the extracellular side. Asn-11 carries an N-linked (GlcNAc...) asparagine glycan. The chain crosses the membrane as a helical span at residues 34–59 (TAVAVLCTLLGLLSALENVAVLYLIL). The Cytoplasmic portion of the chain corresponds to 60–71 (SSHQLRRKPSYL). The chain crosses the membrane as a helical span at residues 72-92 (FIGSLAGADFLASVVFACSFV). Over 93–104 (NFHVFHGVDSKA) the chain is Extracellular. Residues 105 to 129 (VFLLKIGSVTMTFTASVGSLLLTAI) form a helical membrane-spanning segment. The Cytoplasmic portion of the chain corresponds to 130–149 (DRYLCLRYPPSYKALLTRGR). A helical transmembrane segment spans residues 150-172 (ALVTLGIMWVLSALVSYLPLMGW). Over 173–188 (TCCPRPCSELFPLIPN) the chain is Extracellular. The helical transmembrane segment at 189–214 (DYLLSWLLFIAFLFSGIIYTYGHVLW) threads the bilayer. Residues 215–246 (KAHQHVASLSGHQDRQVPGMARMRLDVRLAKT) are Cytoplasmic-facing. Residues 247-267 (LGLVLAVLLICWFPVLALMAH) form a helical membrane-spanning segment. At 268 to 279 (SLATTLSDQVKK) the chain is on the extracellular side. The chain crosses the membrane as a helical span at residues 280-301 (AFAFCSMLCLINSMVNPVIYAL). The Cytoplasmic portion of the chain corresponds to 302-360 (RSGEIRSSAHHCLAHWKKCVRGLGSEAKEEAPRSSVTETEADGKITPWPDSRDLDLSDC). A disordered region spans residues 327–360 (EAKEEAPRSSVTETEADGKITPWPDSRDLDLSDC). Phosphoserine occurs at positions 335 and 336. Phosphothreonine is present on Thr-338. The segment covering 351 to 360 (DSRDLDLSDC) has biased composition (basic and acidic residues). Ser-352 bears the Phosphoserine mark.

It belongs to the G-protein coupled receptor 1 family. In terms of processing, constitutively phosphorylated on Ser-352; phosphorylation increases cell internalization and desensitizes the receptor. Preferentially expressed in cells of the immune system with higher expression in B-cells and NK cells (at protein level). Expressed in skin in suprabasal layers and hair follicles (at protein level). Highly expressed in tonsil and to a lower extent in spleen, peripheral blood mononuclear cells, and thymus. PubMed:14657172 could not detect expression in normal brain. Expressed in brain by perivascular microglial cells and dorsal root ganglion sensory neurons (at protein level). Two isoforms are produced by alternative promoter usage and differ only in the 5' UTR: isoform CB2A is observed predominantly in testis with some expression in brain, while isoform CB2B is predominant in spleen and leukocytes.

The protein resides in the cell membrane. The protein localises to the cell projection. Its subcellular location is the dendrite. It is found in the perikaryon. Its function is as follows. Heterotrimeric G protein-coupled receptor for endocannabinoid 2-arachidonoylglycerol mediating inhibition of adenylate cyclase. May function in inflammatory response, nociceptive transmission and bone homeostasis. The chain is Cannabinoid receptor 2 (CNR2) from Homo sapiens (Human).